The primary structure comprises 213 residues: Cytochrome c biogenesis ATP-binding export protein CcmA (213 aa).

Positions 7–213 (LKTKKLACQR…VRLENYKFTE (207 aa)) constitute an ABC transporter domain. Residue 39 to 46 (GHNGIGKT) participates in ATP binding.

The protein belongs to the ABC transporter superfamily. CcmA exporter (TC 3.A.1.107) family. In terms of assembly, the complex is composed of two ATP-binding proteins (CcmA) and two transmembrane proteins (CcmB).

It localises to the cell inner membrane. It carries out the reaction heme b(in) + ATP + H2O = heme b(out) + ADP + phosphate + H(+). Its function is as follows. Part of the ABC transporter complex CcmAB involved in the biogenesis of c-type cytochromes; once thought to export heme, this seems not to be the case, but its exact role is uncertain. Responsible for energy coupling to the transport system. The chain is Cytochrome c biogenesis ATP-binding export protein CcmA from Pasteurella multocida (strain Pm70).